We begin with the raw amino-acid sequence, 87 residues long: Protein moa-2 (87 aa).

The disordered stretch occupies residues 23-87; it reads GTAMRHEPSR…VWTASREESS (65 aa). 2 stretches are compositionally biased toward basic and acidic residues: residues 26–39 and 50–63; these read MRHEPSRMDCESAP and RNEHVYCRCGEREP.

The chain is Protein moa-2 from Caenorhabditis elegans.